The primary structure comprises 228 residues: Expansin-B13 (228 aa).

A signal peptide spans 1–22; sequence MASSSLLLASVVVAAMVSAVSC. N-linked (GlcNAc...) asparagine glycosylation occurs at N32. One can recognise an Expansin-like EG45 domain in the interval 61–172; sequence SGACGYKDVD…KEKGSEEWKA (112 aa). 2 disulfide bridges follow: C64–C92 and C100–C106. The region spanning 142 to 223 is the Expansin-like CBD domain; it reads GKDEELLKYV…GWKADSVYKS (82 aa).

This sequence belongs to the expansin family. Expansin B subfamily.

The protein localises to the secreted. It is found in the cell wall. It localises to the membrane. In terms of biological role, may cause loosening and extension of plant cell walls by disrupting non-covalent bonding between cellulose microfibrils and matrix glucans. No enzymatic activity has been found. May be required for rapid internodal elongation in deepwater rice during submergence. The sequence is that of Expansin-B13 (EXPB13) from Oryza sativa subsp. japonica (Rice).